Consider the following 90-residue polypeptide: Putative membrane protein insertion efficiency factor (90 aa).

This sequence belongs to the UPF0161 family.

Its subcellular location is the cell inner membrane. Functionally, could be involved in insertion of integral membrane proteins into the membrane. This is Putative membrane protein insertion efficiency factor from Bordetella bronchiseptica (strain ATCC BAA-588 / NCTC 13252 / RB50) (Alcaligenes bronchisepticus).